The chain runs to 39 residues: Larval cuticle protein SC6 (39 aa).

Residues 15 to 39 (VDQFKYGLELDNSIKADQEGHLEGD) enclose the Chitin-binding type R&amp;R domain.

Component of the cuticle of the larva of flesh fly. This Sarcophaga bullata (Grey flesh fly) protein is Larval cuticle protein SC6.